Here is a 198-residue protein sequence, read N- to C-terminus: NAD(P)H dehydrogenase (quinone) (198 aa).

A Flavodoxin-like domain is found at 4-189 (ILVLYYSMYG…SIARYQGEYV (186 aa)). FMN contacts are provided by residues 10 to 15 (SMYGHI) and 78 to 80 (TRF). Tyr-12 contacts NAD(+). Trp-98 provides a ligand contact to substrate. FMN-binding positions include 113 to 118 (STGTGG) and His-133.

This sequence belongs to the WrbA family. FMN serves as cofactor.

The catalysed reaction is a quinone + NADH + H(+) = a quinol + NAD(+). It catalyses the reaction a quinone + NADPH + H(+) = a quinol + NADP(+). In Salmonella paratyphi A (strain ATCC 9150 / SARB42), this protein is NAD(P)H dehydrogenase (quinone).